The primary structure comprises 1004 residues: Retrovirus-related Pol polyprotein from type-1 retrotransposable element R1 (1004 aa).

One can recognise a Reverse transcriptase domain in the interval 450 to 717 (QCLLESYFPQ…SEVKHLGIFV (268 aa)). Positions 853-1004 (LSGSQFKELL…RLMRGMRIRE (152 aa)) are nucleic acid-binding endonuclease.

The enzyme catalyses DNA(n) + a 2'-deoxyribonucleoside 5'-triphosphate = DNA(n+1) + diphosphate. In Bradysia coprophila (Dark-winged fungus gnat), this protein is Retrovirus-related Pol polyprotein from type-1 retrotransposable element R1.